The following is a 135-amino-acid chain: ATP synthase epsilon chain (135 aa).

The protein belongs to the ATPase epsilon chain family. As to quaternary structure, F-type ATPases have 2 components, CF(1) - the catalytic core - and CF(0) - the membrane proton channel. CF(1) has five subunits: alpha(3), beta(3), gamma(1), delta(1), epsilon(1). CF(0) has three main subunits: a, b and c.

The protein localises to the cell inner membrane. Produces ATP from ADP in the presence of a proton gradient across the membrane. The chain is ATP synthase epsilon chain from Nitrobacter winogradskyi (strain ATCC 25391 / DSM 10237 / CIP 104748 / NCIMB 11846 / Nb-255).